The following is a 113-amino-acid chain: Large ribosomal subunit protein uL22 (113 aa).

The protein belongs to the universal ribosomal protein uL22 family. As to quaternary structure, part of the 50S ribosomal subunit.

Functionally, this protein binds specifically to 23S rRNA; its binding is stimulated by other ribosomal proteins, e.g. L4, L17, and L20. It is important during the early stages of 50S assembly. It makes multiple contacts with different domains of the 23S rRNA in the assembled 50S subunit and ribosome. The globular domain of the protein is located near the polypeptide exit tunnel on the outside of the subunit, while an extended beta-hairpin is found that lines the wall of the exit tunnel in the center of the 70S ribosome. This Xanthomonas oryzae pv. oryzae (strain MAFF 311018) protein is Large ribosomal subunit protein uL22.